The sequence spans 362 residues: G-protein coupled receptor homolog US27 (362 aa).

Residues 1-34 (MTTSTNNQTLTQVSNMTNHTLNSTEIYQLFEYTR) are Virion surface-facing. Residues asparagine 7, asparagine 15, asparagine 18, and asparagine 22 are each glycosylated (N-linked (GlcNAc...) asparagine; by host). The chain crosses the membrane as a helical span at residues 35–58 (LGVWLMCIVGTFLNVLVITTILYY). At 59–67 (RRKKKSPSD) the chain is on the intravirion side. Residues 68–90 (TYICNLAVADLLIVVGLPFFLEY) traverse the membrane as a helical segment. At 91–104 (AKHHPKLSREVVCS) the chain is on the virion surface side. The helical transmembrane segment at 105 to 126 (GLNACFYICLFAGVCFLINLSM) threads the bilayer. Residues 127 to 148 (DRYCVIVWGVELNRVRNNKRAT) are Intravirion-facing. The helical transmembrane segment at 149 to 167 (CWVVIFWILAVLMGMPHYL) threads the bilayer. Topologically, residues 168 to 193 (MYSHTNNECVGEFANETSGWFPVFLN) are virion surface. A helical membrane pass occupies residues 194–213 (TKVNICGYLAPIALMAYTYN). Residues 214-233 (RMVRFIINYVGKWHMQTLHV) lie on the Intravirion side of the membrane. The helical transmembrane segment at 234 to 257 (LLVVVVSFASFWFPFNLALFLESI) threads the bilayer. Over 258–274 (RLLAGVYNDTLQNVIIF) the chain is Virion surface. Residues 275-298 (CLYVGQFLAYVRACLNPGIYILVG) form a helical membrane-spanning segment. The Intravirion portion of the chain corresponds to 299 to 362 (TQMRKDMWTT…MESGEEEFLL (64 aa)). A disordered region spans residues 341-362 (TKRTHYDRKNAPMESGEEEFLL).

This sequence belongs to the G-protein coupled receptor 1 family. Heterodimer with US28. Interacts with host Gi alpha-1 subunit GNAI1; this interaction does not lead to the catalytic activation of Gi complex.

It localises to the virion. It is found in the host cell membrane. Its function is as follows. Interacts with the host Gi complex without activating it, thereby probably interfering with the chemokine-Gi signaling. May also function as a G protein sink to sequester G protein from the cell surface via internalization. Plays an important role in spread of HCMV via the extracellular route. The protein is G-protein coupled receptor homolog US27 (US27) of Homo sapiens (Human).